The sequence spans 131 residues: Small ribosomal subunit protein uS9c (131 aa).

It belongs to the universal ribosomal protein uS9 family.

Its subcellular location is the plastid. The protein localises to the chloroplast. In Emiliania huxleyi (Coccolithophore), this protein is Small ribosomal subunit protein uS9c (rps9).